Consider the following 96-residue polypeptide: MQVLVRDNNVDQALRVLKKKMQREGIFREMKQRKAYEKPSVRKAREKAEAVRRARKQARKTAIREGLIAAPKPKARPVSPRRPAAPAPASSPVGAA.

The disordered stretch occupies residues 52 to 96 (RRARKQARKTAIREGLIAAPKPKARPVSPRRPAAPAPASSPVGAA). The segment covering 69–96 (AAPKPKARPVSPRRPAAPAPASSPVGAA) has biased composition (low complexity).

Belongs to the bacterial ribosomal protein bS21 family.

The chain is Small ribosomal subunit protein bS21 from Methylobacterium nodulans (strain LMG 21967 / CNCM I-2342 / ORS 2060).